Reading from the N-terminus, the 591-residue chain is L-lactate dehydrogenase (cytochrome) (591 aa).

The N-terminal 80 residues, 1–80, are a transit peptide targeting the mitochondrion; it reads MLKYKPLLKI…LNWHNGQIDN (80 aa). Residues 88 to 165 form the Cytochrome b5 heme-binding domain; sequence KQKISPAEVA…APEKKLGPLQ (78 aa). Positions 123, 146, 177, 219, and 223 each coordinate heme b. The FMN hydroxy acid dehydrogenase domain occupies 197 to 563; that stretch reads PPLDNIINLY…KPDLLDLSTL (367 aa). Y223 contributes to the pyruvate binding site. FMN contacts are provided by residues 275–278, S308, and Q332; that span reads SATA. Y334 serves as a coordination point for pyruvate. T360 contributes to the FMN binding site. Residue K376 participates in heme b binding. K429 lines the FMN pocket. H453 and R456 together coordinate pyruvate. The active-site Proton acceptor is H453. Residues 489–493 and 512–513 contribute to the FMN site; these read DGGVR and GR.

The protein in the N-terminal section; belongs to the cytochrome b5 family. This sequence in the C-terminal section; belongs to the FMN-dependent alpha-hydroxy acid dehydrogenase family. Homotetramer. Requires FMN as cofactor. Heme b is required as a cofactor.

It localises to the mitochondrion intermembrane space. It catalyses the reaction (S)-lactate + 2 Fe(III)-[cytochrome c] = 2 Fe(II)-[cytochrome c] + pyruvate + 2 H(+). Catalyzes the oxidation of (S)-lactate (L-lactate) to pyruvate with subsequent transfer of electrons to cytochrome c. Is involved in the utilization of (S)-lactate as a sole source of carbon for growth. Can also use ferricyanide as an electron acceptor in vitro. The sequence is that of L-lactate dehydrogenase (cytochrome) (CYB2) from Saccharomyces cerevisiae (strain ATCC 204508 / S288c) (Baker's yeast).